A 366-amino-acid polypeptide reads, in one-letter code: Carbamoyl phosphate synthase small chain (366 aa).

A CPSase region spans residues 1 to 171; sequence MKKRKLILED…KPYVVPGRGL (171 aa). L-glutamine contacts are provided by serine 46, glycine 220, and glycine 222. In terms of domain architecture, Glutamine amidotransferase type-1 spans 172-359; the sequence is RVVMVDFGAK…LNLIKASKVK (188 aa). The Nucleophile role is filled by cysteine 247. 4 residues coordinate L-glutamine: leucine 248, glutamine 251, asparagine 289, and tyrosine 292. Catalysis depends on residues histidine 332 and glutamate 334.

Belongs to the CarA family. As to quaternary structure, composed of two chains; the small (or glutamine) chain promotes the hydrolysis of glutamine to ammonia, which is used by the large (or ammonia) chain to synthesize carbamoyl phosphate. Tetramer of heterodimers (alpha,beta)4.

It carries out the reaction hydrogencarbonate + L-glutamine + 2 ATP + H2O = carbamoyl phosphate + L-glutamate + 2 ADP + phosphate + 2 H(+). The catalysed reaction is L-glutamine + H2O = L-glutamate + NH4(+). It participates in amino-acid biosynthesis; L-arginine biosynthesis; carbamoyl phosphate from bicarbonate: step 1/1. Its pathway is pyrimidine metabolism; UMP biosynthesis via de novo pathway; (S)-dihydroorotate from bicarbonate: step 1/3. Its function is as follows. Small subunit of the glutamine-dependent carbamoyl phosphate synthetase (CPSase). CPSase catalyzes the formation of carbamoyl phosphate from the ammonia moiety of glutamine, carbonate, and phosphate donated by ATP, constituting the first step of 2 biosynthetic pathways, one leading to arginine and/or urea and the other to pyrimidine nucleotides. The small subunit (glutamine amidotransferase) binds and cleaves glutamine to supply the large subunit with the substrate ammonia. The chain is Carbamoyl phosphate synthase small chain from Oceanobacillus iheyensis (strain DSM 14371 / CIP 107618 / JCM 11309 / KCTC 3954 / HTE831).